A 420-amino-acid polypeptide reads, in one-letter code: Glucose-1-phosphate adenylyltransferase (420 aa).

Residues Tyr-97, Gly-162, 177–178 (EK), and Ser-188 each bind alpha-D-glucose 1-phosphate.

It belongs to the bacterial/plant glucose-1-phosphate adenylyltransferase family. Homotetramer.

It carries out the reaction alpha-D-glucose 1-phosphate + ATP + H(+) = ADP-alpha-D-glucose + diphosphate. It functions in the pathway glycan biosynthesis; glycogen biosynthesis. Its function is as follows. Involved in the biosynthesis of ADP-glucose, a building block required for the elongation reactions to produce glycogen. Catalyzes the reaction between ATP and alpha-D-glucose 1-phosphate (G1P) to produce pyrophosphate and ADP-Glc. This is Glucose-1-phosphate adenylyltransferase from Pseudothermotoga lettingae (strain ATCC BAA-301 / DSM 14385 / NBRC 107922 / TMO) (Thermotoga lettingae).